The sequence spans 275 residues: Pyrroline-5-carboxylate reductase (275 aa).

The protein belongs to the pyrroline-5-carboxylate reductase family.

The protein resides in the cytoplasm. The catalysed reaction is L-proline + NADP(+) = (S)-1-pyrroline-5-carboxylate + NADPH + 2 H(+). It carries out the reaction L-proline + NAD(+) = (S)-1-pyrroline-5-carboxylate + NADH + 2 H(+). It participates in amino-acid biosynthesis; L-proline biosynthesis; L-proline from L-glutamate 5-semialdehyde: step 1/1. Its function is as follows. Catalyzes the reduction of 1-pyrroline-5-carboxylate (PCA) to L-proline. This Pasteurella multocida (strain Pm70) protein is Pyrroline-5-carboxylate reductase.